Here is a 335-residue protein sequence, read N- to C-terminus: Glycerol-3-phosphate dehydrogenase [NAD(P)+] (335 aa).

The NADPH site is built by S15, Y16, H36, and K110. K110, G139, and T141 together coordinate sn-glycerol 3-phosphate. A143 lines the NADPH pocket. Positions 195, 248, 258, 259, and 260 each coordinate sn-glycerol 3-phosphate. K195 (proton acceptor) is an active-site residue. R259 is an NADPH binding site. Residues V283 and E285 each coordinate NADPH.

Belongs to the NAD-dependent glycerol-3-phosphate dehydrogenase family.

The protein localises to the cytoplasm. It carries out the reaction sn-glycerol 3-phosphate + NAD(+) = dihydroxyacetone phosphate + NADH + H(+). It catalyses the reaction sn-glycerol 3-phosphate + NADP(+) = dihydroxyacetone phosphate + NADPH + H(+). It functions in the pathway membrane lipid metabolism; glycerophospholipid metabolism. In terms of biological role, catalyzes the reduction of the glycolytic intermediate dihydroxyacetone phosphate (DHAP) to sn-glycerol 3-phosphate (G3P), the key precursor for phospholipid synthesis. The protein is Glycerol-3-phosphate dehydrogenase [NAD(P)+] of Haemophilus influenzae (strain ATCC 51907 / DSM 11121 / KW20 / Rd).